The following is a 528-amino-acid chain: Apolipoprotein N-acyltransferase (528 aa).

5 helical membrane-spanning segments follow: residues Ile8–Ala28, Ala69–Gly89, Phe99–Gly119, Val178–Leu198, and Gly203–Ala223. The CN hydrolase domain occupies Val241–Leu490. Glu285 (proton acceptor) is an active-site residue. Lys349 is an active-site residue. Cys402 serves as the catalytic Nucleophile.

The protein belongs to the CN hydrolase family. Apolipoprotein N-acyltransferase subfamily.

It localises to the cell inner membrane. The catalysed reaction is N-terminal S-1,2-diacyl-sn-glyceryl-L-cysteinyl-[lipoprotein] + a glycerophospholipid = N-acyl-S-1,2-diacyl-sn-glyceryl-L-cysteinyl-[lipoprotein] + a 2-acyl-sn-glycero-3-phospholipid + H(+). It participates in protein modification; lipoprotein biosynthesis (N-acyl transfer). In terms of biological role, catalyzes the phospholipid dependent N-acylation of the N-terminal cysteine of apolipoprotein, the last step in lipoprotein maturation. This Allorhizobium ampelinum (strain ATCC BAA-846 / DSM 112012 / S4) (Agrobacterium vitis (strain S4)) protein is Apolipoprotein N-acyltransferase.